Here is a 660-residue protein sequence, read N- to C-terminus: Polyadenylation factor subunit 2 (660 aa).

Positions 1–12 are enriched in basic and acidic residues; the sequence is MSYEPRGDHDKG. The segment at 1–32 is disordered; that stretch reads MSYEPRGDHDKGYGGGGGHDGLPPRNRGRRPV. WD repeat units lie at residues 94 to 133, 136 to 176, 177 to 216, 219 to 258, 261 to 301, 304 to 344, and 376 to 415; these read KIKH…FETI, AHDS…ESIR, GHTD…TDMT, GHGW…CLTT, GHKN…DIAL, GHEK…TAPD, and AHDF…EAPE. A disordered region spans residues 562–660; it reads KAGYQPPPPP…QSKGNYTRVR (99 aa). Residues 566–610 are compositionally biased toward pro residues; it reads QPPPPPGSAGAPMPPPGILPPGLIPPPGAAGFPMPPPGFAPPPLI.

The protein localises to the nucleus. Functionally, required for 3'-end cleavage and polyadenylation of pre-mRNAs. Also involved in chromosome segregation where it has a role in chromosome attachment to the mitotic spindle. The chain is Polyadenylation factor subunit 2 (paa-1) from Neurospora crassa (strain ATCC 24698 / 74-OR23-1A / CBS 708.71 / DSM 1257 / FGSC 987).